The primary structure comprises 115 residues: Large ribosomal subunit protein bL20 (115 aa).

It belongs to the bacterial ribosomal protein bL20 family.

Binds directly to 23S ribosomal RNA and is necessary for the in vitro assembly process of the 50S ribosomal subunit. It is not involved in the protein synthesizing functions of that subunit. The polypeptide is Large ribosomal subunit protein bL20 (Mycoplasmoides gallisepticum (strain R(low / passage 15 / clone 2)) (Mycoplasma gallisepticum)).